Reading from the N-terminus, the 358-residue chain is 3-isopropylmalate dehydrogenase (358 aa).

Residue 79 to 92 (GPKWEHLPPDEQPE) participates in NAD(+) binding. Residues arginine 100, arginine 110, arginine 139, and aspartate 227 each coordinate substrate. Aspartate 227, aspartate 251, and aspartate 255 together coordinate Mg(2+). 285–297 (GSAPDIAGKGVAN) is a binding site for NAD(+).

It belongs to the isocitrate and isopropylmalate dehydrogenases family. LeuB type 1 subfamily. As to quaternary structure, homodimer. It depends on Mg(2+) as a cofactor. The cofactor is Mn(2+).

The protein localises to the cytoplasm. It carries out the reaction (2R,3S)-3-isopropylmalate + NAD(+) = 4-methyl-2-oxopentanoate + CO2 + NADH. The protein operates within amino-acid biosynthesis; L-leucine biosynthesis; L-leucine from 3-methyl-2-oxobutanoate: step 3/4. Functionally, catalyzes the oxidation of 3-carboxy-2-hydroxy-4-methylpentanoate (3-isopropylmalate) to 3-carboxy-4-methyl-2-oxopentanoate. The product decarboxylates to 4-methyl-2 oxopentanoate. The chain is 3-isopropylmalate dehydrogenase from Pseudoalteromonas translucida (strain TAC 125).